The chain runs to 273 residues: Phosphate import ATP-binding protein PstB (273 aa).

An ABC transporter domain is found at L19–A258. G51–S58 provides a ligand contact to ATP.

The protein belongs to the ABC transporter superfamily. Phosphate importer (TC 3.A.1.7) family. As to quaternary structure, the complex is composed of two ATP-binding proteins (PstB), two transmembrane proteins (PstC and PstA) and a solute-binding protein (PstS).

The protein localises to the cell inner membrane. The enzyme catalyses phosphate(out) + ATP + H2O = ADP + 2 phosphate(in) + H(+). Functionally, part of the ABC transporter complex PstSACB involved in phosphate import. Responsible for energy coupling to the transport system. The sequence is that of Phosphate import ATP-binding protein PstB from Synechococcus sp. (strain CC9605).